The chain runs to 89 residues: Cell division topological specificity factor (89 aa).

This sequence belongs to the MinE family.

In terms of biological role, prevents the cell division inhibition by proteins MinC and MinD at internal division sites while permitting inhibition at polar sites. This ensures cell division at the proper site by restricting the formation of a division septum at the midpoint of the long axis of the cell. The chain is Cell division topological specificity factor from Sodalis glossinidius (strain morsitans).